We begin with the raw amino-acid sequence, 330 residues long: uncharacterized protein (330 aa).

The region spanning 96–256 is the JmjC domain; that stretch reads AALEFDFTDL…LMLAALRKKL (161 aa). Residues His-145, Asp-147, and His-224 each coordinate Fe cation.

Belongs to the ROX family. Fe(2+) serves as cofactor.

This is an uncharacterized protein from Bacillus subtilis (strain 168).